A 532-amino-acid polypeptide reads, in one-letter code: Cytochrome P450 monooxygenase criE (532 aa).

Residues valine 18–leucine 38 traverse the membrane as a helical segment. Cysteine 441 serves as a coordination point for heme.

This sequence belongs to the cytochrome P450 family. It depends on heme as a cofactor.

It localises to the membrane. The enzyme catalyses preechinulin + reduced [NADPH--hemoprotein reductase] + O2 = neoechinulin A + oxidized [NADPH--hemoprotein reductase] + 2 H2O + H(+). It participates in secondary metabolite biosynthesis. Its pathway is alkaloid biosynthesis. Functionally, cytochrome P450 monooxygenase; part of the gene cluster that mediates the biosynthesis of echinulin family alkaloid. The pathway begins with the biosynthesis of the cyclic dipeptide cyclo-L-Trp-L-Ala (cyclo-TA) by the NRPS criC via condensation of L-alanine and L-tryptophan. The prenyltransferase criA then catalyzes the first prenylation step, a reverse prenylation reaction at C2, to yield preechinulin. Preechinulin is the substrate of the cytochrome P450 monooxygenase criE that catalyzes the formation of the double bond between C10 and C11 to produce neoechulin A. The unique prenyltransferase criF functions as a competitive enzyme with criE for preechinulin metabolization and uses preechinulin for effective regiospecific prenylations. Preechinulin is prenylated by criF at C5 or C7. C7-prenylation leads to accumulation of tardioxopiperazine B without further modification by criF. In contrast, the C5-prenylated tardioxopiperazine A can be prenylated again by criF, predominantly at C7 to form echinulin or less frequently at C4 to give variecolorin L. CriF also accepts neoechilunin A to produce varlecolorin G (prenylation at C5) or isoechinulin A (prenylation at C7). CriF further converts isoechinulin A into dehydroechinulin. Moreover, a yet unidentified enzyme can also convert neoechilunin A into neoechilunin B by introducing a double bond between positions C14 and C17 and thus provides a further substrate to criF for C5 and C7 prenylation. The sequence is that of Cytochrome P450 monooxygenase criE from Aspergillus cristatus (Chinese Fuzhuan brick tea-fermentation fungus).